Here is a 187-residue protein sequence, read N- to C-terminus: Meiotically up-regulated protein C1442.13c (187 aa).

Disordered regions lie at residues 15 to 46 (QWEN…LSNE) and 119 to 145 (IQEG…PAIN). The segment covering 26-41 (PPRKPKIVQPKKKPSK) has biased composition (basic residues). The G-patch domain occupies 145–187 (NNGKGKQLLEMMGWSRGKGLGSENQGMVDPVVAVVKNNKQGLH).

The protein localises to the nucleus. The protein resides in the cytoplasm. It is found in the cytoskeleton. Its subcellular location is the microtubule organizing center. It localises to the spindle pole body. In terms of biological role, has a role in meiosis and sporulation. Required for meiotic chromosome segregation. This is Meiotically up-regulated protein C1442.13c from Schizosaccharomyces pombe (strain 972 / ATCC 24843) (Fission yeast).